Reading from the N-terminus, the 91-residue chain is Late embryogenesis abundant protein EMB564 (91 aa).

Composition is skewed to basic and acidic residues over residues 1 to 19 (MASG…REGE) and 32 to 51 (EAQE…RREQ). Residues 1–91 (MASGQESRKE…VTIDESKFTK (91 aa)) form a disordered region.

Belongs to the small hydrophilic plant seed protein family.

LEA proteins are late embryonic proteins abundant in higher plant seed embryos. They may play an essential role in seed survival and in controlling water exchanges during seed desiccation and imbibition. The sequence is that of Late embryogenesis abundant protein EMB564 from Zea mays (Maize).